Here is a 113-residue protein sequence, read N- to C-terminus: MHEFGITQNIVAIVTEHAKGAKVQRVLLEIGKLSAIMPDAIRFCFDICTQGTVLEGATLEILEIPGLGRCRQCGGEIYLDKPFGICNCGSVQLDLITGEELKIKEIEIEELCV.

Residue His-2 participates in Ni(2+) binding. 4 residues coordinate Zn(2+): Cys-70, Cys-73, Cys-86, and Cys-88.

Belongs to the HypA/HybF family.

Functionally, involved in the maturation of [NiFe] hydrogenases. Required for nickel insertion into the metal center of the hydrogenase. The sequence is that of Hydrogenase maturation factor HypA from Nostoc punctiforme (strain ATCC 29133 / PCC 73102).